Consider the following 361-residue polypeptide: Serine/threonine-protein kinase SRK2B (361 aa).

Positions 4 to 260 constitute a Protein kinase domain; that stretch reads YELVKDIGAG…IGDIKKHPWF (257 aa). ATP contacts are provided by residues 10-18 and Lys33; that span reads IGAGNFGVA. Residue Asp123 is the Proton acceptor of the active site. Residue Ser154 is modified to Phosphoserine. A disordered region spans residues 311–361; that stretch reads AFGWGGGEDAEGKEEDAEEEVEEVEEEEDEEDEYDKTVKQVHASMGEVRVS. Acidic residues predominate over residues 318-344; sequence EDAEGKEEDAEEEVEEVEEEEDEEDEY.

The protein belongs to the protein kinase superfamily. Ser/Thr protein kinase family. In terms of tissue distribution, expressed in seedlings.

The enzyme catalyses L-seryl-[protein] + ATP = O-phospho-L-seryl-[protein] + ADP + H(+). It carries out the reaction L-threonyl-[protein] + ATP = O-phospho-L-threonyl-[protein] + ADP + H(+). In Arabidopsis thaliana (Mouse-ear cress), this protein is Serine/threonine-protein kinase SRK2B (SRK2B).